A 92-amino-acid polypeptide reads, in one-letter code: UPF0250 protein PD_0532 (92 aa).

It belongs to the UPF0250 family.

The protein is UPF0250 protein PD_0532 of Xylella fastidiosa (strain Temecula1 / ATCC 700964).